The following is a 201-amino-acid chain: Large ribosomal subunit protein bL25 (201 aa).

This sequence belongs to the bacterial ribosomal protein bL25 family. CTC subfamily. Part of the 50S ribosomal subunit; part of the 5S rRNA/L5/L18/L25 subcomplex. Contacts the 5S rRNA. Binds to the 5S rRNA independently of L5 and L18.

Functionally, this is one of the proteins that binds to the 5S RNA in the ribosome where it forms part of the central protuberance. The sequence is that of Large ribosomal subunit protein bL25 from Thiobacillus denitrificans (strain ATCC 25259 / T1).